Consider the following 498-residue polypeptide: Minor fimbrium subunit Mfa1 (498 aa).

The signal sequence occupies residues 1–19; it reads MKLNKMFLVGALLSLGFAS. C20 carries N-palmitoyl cysteine lipidation. Residue C20 is the site of S-diacylglycerol cysteine attachment. Residues 20-50 constitute a propeptide that is removed on maturation; the sequence is CSKEGNGPAPDSSSTADTHMSVSMSLPQHNR. Positions 436 to 476 are disordered; sequence SGNPFVPTDPDPNNPDTPDNPDTPDPEDPDTPNPEEPLPVQ.

Belongs to the bacteroidetes fimbrillin superfamily. FimA/Mfa1 family. In terms of assembly, structural component of the fimbrial stalk. Minor fimbriae are composed of a structural subunit, most often Mfa1, and the accessory subunits Mfa3, Mfa4 and Mfa5. Mfa1 interacts with Mfa2; this anchors the fimbrium in the membrane. Fimbrium assembly occurs by linear, head-to-tail oligomerization of fimbrial subunits. This is mediated via insertion of a C-terminal beta-strand from one subunit into a groove in the N-terminal domain of the following subunit.

It localises to the fimbrium. The protein resides in the cell outer membrane. In terms of biological role, structural subunit of the minor fimbriae. These filamentous pili are attached to the cell surface; they mediate biofilm formation, adhesion onto host cells and onto other bacteria that are part of the oral microbiome. They play an important role in invasion of periodontal tissues and are recognized as major virulence factors. Mfa1 orthologs from different strains have highly divergent sequences, and this correlates with pathogenicity. The chain is Minor fimbrium subunit Mfa1 from Porphyromonas gingivalis (Bacteroides gingivalis).